A 68-amino-acid chain; its full sequence is Guanine nucleotide-binding protein G(I)/G(S)/G(O) subunit gamma-10 (68 aa).

At Ser2 the chain carries N-acetylserine. The residue at position 65 (Cys65) is a Cysteine methyl ester. A lipid anchor (S-geranylgeranyl cysteine) is attached at Cys65. Positions 66–68 (ALL) are cleaved as a propeptide — removed in mature form.

The protein belongs to the G protein gamma family. In terms of assembly, g proteins are composed of 3 units, alpha, beta and gamma. In terms of tissue distribution, abundantly and ubiquitously expressed.

It is found in the cell membrane. In terms of biological role, guanine nucleotide-binding proteins (G proteins) are involved as a modulator or transducer in various transmembrane signaling systems. The beta and gamma chains are required for the GTPase activity, for replacement of GDP by GTP, and for G protein-effector interaction. Interacts with beta-1 and beta-2, but not with beta-3. This Homo sapiens (Human) protein is Guanine nucleotide-binding protein G(I)/G(S)/G(O) subunit gamma-10 (GNG10).